A 285-amino-acid chain; its full sequence is Acetylglutamate kinase (285 aa).

Substrate-binding positions include Gly63–Gly64, Arg85, and Asn178.

It belongs to the acetylglutamate kinase family. ArgB subfamily.

It is found in the cytoplasm. The catalysed reaction is N-acetyl-L-glutamate + ATP = N-acetyl-L-glutamyl 5-phosphate + ADP. Its pathway is amino-acid biosynthesis; L-arginine biosynthesis; N(2)-acetyl-L-ornithine from L-glutamate: step 2/4. In terms of biological role, catalyzes the ATP-dependent phosphorylation of N-acetyl-L-glutamate. This Synechococcus sp. (strain CC9311) protein is Acetylglutamate kinase.